Consider the following 434-residue polypeptide: Probable carboxypeptidase BDCG_03757 (434 aa).

An N-terminal signal peptide occupies residues 1 to 20; that stretch reads MKLSHLAAALSAQLVAPVAA. 2 N-linked (GlcNAc...) asparagine glycosylation sites follow: N136 and N150. Residue D160 coordinates Zn(2+). E192 serves as the catalytic Proton acceptor. E193 is a Zn(2+) binding site. N-linked (GlcNAc...) asparagine glycosylation is present at N343.

Belongs to the peptidase M20A family. Zn(2+) serves as cofactor.

The protein localises to the secreted. The protein is Probable carboxypeptidase BDCG_03757 of Ajellomyces dermatitidis (strain ER-3 / ATCC MYA-2586) (Blastomyces dermatitidis).